The chain runs to 176 residues: Ribosome maturation factor RimM (176 aa).

The region spanning 101-174 is the PRC barrel domain; it reads EGHYYIYQLL…EIRVELPPGL (74 aa).

This sequence belongs to the RimM family. As to quaternary structure, binds ribosomal protein uS19.

The protein resides in the cytoplasm. An accessory protein needed during the final step in the assembly of 30S ribosomal subunit, possibly for assembly of the head region. Essential for efficient processing of 16S rRNA. May be needed both before and after RbfA during the maturation of 16S rRNA. It has affinity for free ribosomal 30S subunits but not for 70S ribosomes. The protein is Ribosome maturation factor RimM of Moorella thermoacetica (strain ATCC 39073 / JCM 9320).